A 345-amino-acid chain; its full sequence is NADH-ubiquinone oxidoreductase chain 2 (345 aa).

10 helical membrane-spanning segments follow: residues 1–21, 25–45, 59–79, 96–116, 123–143, 148–168, 191–211, 240–260, 274–294, and 324–344; these read MNPIINLILLSSMIAGTILTM, HWVSAWLGLELNTLAIIPIIS, YFLIQAASSALFLLSGITNAY, IMLSVALATKLGLAPIHFWLP, PMITALIITTWQKIAPMALLI, LIPPTITLIMGLLSTIIGGLG, ITITTITPSLALFNLTLYILL, TASLFLLSLLSLGGLPPLSGF, HLTPLALLMAITALLSLMFYL, and SLLSSLILLSLFLLPITPLMI.

It belongs to the complex I subunit 2 family.

It localises to the mitochondrion inner membrane. The enzyme catalyses a ubiquinone + NADH + 5 H(+)(in) = a ubiquinol + NAD(+) + 4 H(+)(out). Its function is as follows. Core subunit of the mitochondrial membrane respiratory chain NADH dehydrogenase (Complex I) that is believed to belong to the minimal assembly required for catalysis. Complex I functions in the transfer of electrons from NADH to the respiratory chain. The immediate electron acceptor for the enzyme is believed to be ubiquinone. This is NADH-ubiquinone oxidoreductase chain 2 (MT-ND2) from Varanus timorensis (Timor monitor).